The following is a 138-amino-acid chain: Eukaryotic translation initiation factor 1A (138 aa).

Over residues 1 to 15 the composition is skewed to basic residues; the sequence is MPKNKGKGGKNRRRG. The tract at residues 1-28 is disordered; it reads MPKNKGKGGKNRRRGKNENENEKRELTY. Over residues 16–27 the composition is skewed to basic and acidic residues; it reads KNENENEKRELT. Positions 22 to 96 constitute an S1-like domain; sequence EKRELTYAEE…EKGDVILKYT (75 aa).

The protein belongs to the eIF-1A family.

In terms of biological role, seems to be required for maximal rate of protein biosynthesis. Enhances ribosome dissociation into subunits and stabilizes the binding of the initiator Met-tRNA(I) to 40 S ribosomal subunits. This Schizosaccharomyces pombe (strain 972 / ATCC 24843) (Fission yeast) protein is Eukaryotic translation initiation factor 1A (tif11).